Reading from the N-terminus, the 106-residue chain is uncharacterized protein (106 aa).

Residues 1 to 22 form the signal peptide; the sequence is MKKHPNLLLGFSVYLSAGTKLT. The disordered stretch occupies residues 23–46; sequence IPPEAEQHTAPSDNNKRKRAKCDD.

This is an uncharacterized protein from Arabidopsis thaliana (Mouse-ear cress).